An 84-amino-acid polypeptide reads, in one-letter code: Apoptosis inhibitor Rv3654c (84 aa).

Residues methionine 1–alanine 39 form the signal peptide.

Interacts with human polypyrimidine tract binding protein-associated splicing factor (PSF).

It localises to the secreted. Its subcellular location is the host cytoplasm. In terms of biological role, effector protein that participates in the suppression of macrophage apoptosis by blocking the extrinsic pathway. Recognizes the host polypyrimidine tract binding protein-associated splicing factor (PSF), which probably leads to its cleavage, diminishing the level of caspase-8 in macrophages. The chain is Apoptosis inhibitor Rv3654c from Mycobacterium tuberculosis (strain ATCC 25618 / H37Rv).